Here is a 517-residue protein sequence, read N- to C-terminus: Phenol 2-monooxygenase, oxygenase component DmpN (517 aa).

Fe cation-binding residues include E109, E139, H142, E200, E234, and H237.

Belongs to the TmoA/XamoA family. In terms of assembly, the multicomponent enzyme phenol hydroxylase is formed by DmpL (P1 component), DmpM (P2 component), DmpN (P3 component), DmpO (P4 component) and DmpP (P5 component). The oxygenase component is a dimer composed of three subunits, DmpL, DmpN and DmpO (DmpLNO). DmpN interacts with the auxiliary protein DmpK (P0 component). It depends on Fe(2+) as a cofactor.

The catalysed reaction is phenol + NADH + O2 + H(+) = catechol + NAD(+) + H2O. The protein operates within aromatic compound metabolism; phenol degradation. Requires DmpM for efficient turnover. The activity of DmpLNO oxygenase is inhibited by dithiothreitol (DTT) by a mechanism apparently involving H(2)O(2) generation. Its function is as follows. Part of a multicomponent enzyme which catalyzes the degradation of phenol and some of its methylated derivatives. DmpL, DmpN and DmpO form the oxygenase component of the complex. Required for growth on phenol and for in vitro phenol hydroxylase activity. The sequence is that of Phenol 2-monooxygenase, oxygenase component DmpN from Pseudomonas sp. (strain CF600).